The chain runs to 452 residues: 1,4-beta-D-glucan cellobiohydrolase A (452 aa).

The first 17 residues, 1 to 17, serve as a signal peptide directing secretion; that stretch reads MHQRALLFSALLTAVRA. N62 carries N-linked (GlcNAc...) asparagine glycosylation. The active-site Nucleophile is the E227. The active-site Proton donor is the E232. N285, N335, N402, and N445 each carry an N-linked (GlcNAc...) asparagine glycan.

Belongs to the glycosyl hydrolase 7 (cellulase C) family.

The protein resides in the secreted. It catalyses the reaction Hydrolysis of (1-&gt;4)-beta-D-glucosidic linkages in cellulose and cellotetraose, releasing cellobiose from the non-reducing ends of the chains.. The biological conversion of cellulose to glucose generally requires three types of hydrolytic enzymes: (1) Endoglucanases which cut internal beta-1,4-glucosidic bonds; (2) Exocellobiohydrolases that cut the disaccharide cellobiose from the non-reducing end of the cellulose polymer chain; (3) Beta-1,4-glucosidases which hydrolyze the cellobiose and other short cello-oligosaccharides to glucose. The polypeptide is 1,4-beta-D-glucan cellobiohydrolase A (cbhA) (Aspergillus niger).